The primary structure comprises 105 residues: Gastrin/cholecystokinin-like peptide (105 aa).

The first 20 residues, 1-20 (MKTKVFLGLILSAAVTACLC), serve as a signal peptide directing secretion. Positions 21-38 (RPAAKAPGGSHRPTSSLA) are excised as a propeptide. Residues 24-51 (AKAPGGSHRPTSSLARRDWPEPPSQEQQ) form a disordered region. The residue at position 87 (Y87) is a Sulfotyrosine. Residue F93 is modified to Phenylalanine amide. Residues 97 to 105 (STEDAADAA) constitute a propeptide that is removed on maturation.

This sequence belongs to the gastrin/cholecystokinin family.

It localises to the secreted. Functionally, potent stimulus of gastric acid, but not of pancreatic secretion. This Gallus gallus (Chicken) protein is Gastrin/cholecystokinin-like peptide.